The primary structure comprises 99 residues: Ferredoxin, heterocyst (99 aa).

The 93-residue stretch at Tyr-4–Pro-96 folds into the 2Fe-2S ferredoxin-type domain. Residues Cys-42, Cys-47, Cys-50, and Cys-80 each contribute to the [2Fe-2S] cluster site.

Belongs to the 2Fe2S plant-type ferredoxin family. The cofactor is [2Fe-2S] cluster.

Ferredoxins are iron-sulfur proteins that transfer electrons in a wide variety of metabolic reactions. This Microchaete diplosiphon (Fremyella diplosiphon) protein is Ferredoxin, heterocyst (fdxH).